Reading from the N-terminus, the 122-residue chain is Prefoldin subunit 1 (122 aa).

Residue Ala-2 is modified to N-acetylalanine.

This sequence belongs to the prefoldin subunit beta family. As to quaternary structure, heterohexamer of two PFD-alpha type and four PFD-beta type subunits.

Binds specifically to cytosolic chaperonin (c-CPN) and transfers target proteins to it. Binds to nascent polypeptide chain and promotes folding in an environment in which there are many competing pathways for nonnative proteins. The protein is Prefoldin subunit 1 (Pfdn1) of Mus musculus (Mouse).